Here is a 238-residue protein sequence, read N- to C-terminus: Ribonuclease PH (238 aa).

Phosphate is bound by residues Arg86 and 124 to 126 (GTR).

The protein belongs to the RNase PH family. In terms of assembly, homohexameric ring arranged as a trimer of dimers.

The enzyme catalyses tRNA(n+1) + phosphate = tRNA(n) + a ribonucleoside 5'-diphosphate. Its function is as follows. Phosphorolytic 3'-5' exoribonuclease that plays an important role in tRNA 3'-end maturation. Removes nucleotide residues following the 3'-CCA terminus of tRNAs; can also add nucleotides to the ends of RNA molecules by using nucleoside diphosphates as substrates, but this may not be physiologically important. Probably plays a role in initiation of 16S rRNA degradation (leading to ribosome degradation) during starvation. The sequence is that of Ribonuclease PH from Hahella chejuensis (strain KCTC 2396).